The chain runs to 105 residues: Putative toxin MazF8 (105 aa).

In terms of assembly, forms a complex with cognate antitoxin MazE8.

Functionally, putative toxic component of a type II toxin-antitoxin (TA) system. Acts as an endoribonuclease. Neutralized by coexpression with cognate antitoxin MazE8. This is Putative toxin MazF8 (mazF8) from Mycobacterium tuberculosis (strain CDC 1551 / Oshkosh).